A 194-amino-acid chain; its full sequence is MRLCDRDIIKALDEGSIVIEPRPDNSVISGVSVDLRLGNSFRVFQGHPAPYLDLSSSKADLSKVIESVMSEEILVDDGKPFFIHPGELVLGVTKESVTLPDNLVGWLDGRSSLARLGLMVHVTAHRIDPGWSGGIVLEFLNGGKLPIALSPGMTIGAINFETMSGSADRPYNKRDNAKYKDQTSAVGSRISGEN.

DCTP is bound by residues R110–R115, D128, V136–E138, Y171, K178, and Q182. The active-site Proton donor/acceptor is the E138. The interval R169 to N194 is disordered. The span at P170–D181 shows a compositional bias: basic and acidic residues. Residues Q182–N194 show a composition bias toward polar residues.

It belongs to the dCTP deaminase family. As to quaternary structure, homotrimer.

It catalyses the reaction dCTP + H2O + H(+) = dUTP + NH4(+). It functions in the pathway pyrimidine metabolism; dUMP biosynthesis; dUMP from dCTP (dUTP route): step 1/2. Its function is as follows. Catalyzes the deamination of dCTP to dUTP. In Marinomonas sp. (strain MWYL1), this protein is dCTP deaminase.